Consider the following 470-residue polypeptide: Dihydrolipoyl dehydrogenase (470 aa).

Residues 39–47 (EKGNLGGVC), Lys-56, and Ala-119 each bind FAD. A disulfide bridge connects residues Cys-47 and Cys-52. NAD(+) is bound by residues 183-187 (GGGYI), Glu-206, and 271-274 (TVGR). FAD is bound by residues Asp-314 and Ala-322. His-446 (proton acceptor) is an active-site residue.

The protein belongs to the class-I pyridine nucleotide-disulfide oxidoreductase family. Homodimer. Identified in a complex with PdhC. FAD serves as cofactor.

It localises to the cytoplasm. It carries out the reaction N(6)-[(R)-dihydrolipoyl]-L-lysyl-[protein] + NAD(+) = N(6)-[(R)-lipoyl]-L-lysyl-[protein] + NADH + H(+). Its function is as follows. Lipoamide dehydrogenase is a component of the alpha-ketoacid dehydrogenase complexes. This Geobacillus stearothermophilus (Bacillus stearothermophilus) protein is Dihydrolipoyl dehydrogenase (pdhD).